Here is a 485-residue protein sequence, read N- to C-terminus: Cysteine--tRNA ligase (485 aa).

Residue Cys27 participates in Zn(2+) binding. The 'HIGH' region signature appears at 29-39; that stretch reads ITAYDLCHIGH. Residues Cys208, His233, and Glu237 each contribute to the Zn(2+) site. The 'KMSKS' region signature appears at 265–269; sequence KMSKS. Lys268 is a binding site for ATP.

This sequence belongs to the class-I aminoacyl-tRNA synthetase family. Monomer. Zn(2+) serves as cofactor.

The protein localises to the cytoplasm. The enzyme catalyses tRNA(Cys) + L-cysteine + ATP = L-cysteinyl-tRNA(Cys) + AMP + diphosphate. The protein is Cysteine--tRNA ligase of Solidesulfovibrio magneticus (strain ATCC 700980 / DSM 13731 / RS-1) (Desulfovibrio magneticus).